A 710-amino-acid polypeptide reads, in one-letter code: Protein-glutamine gamma-glutamyltransferase Z (710 aa).

Catalysis depends on residues Cys-279, His-338, and Asp-361. Asn-401, Asp-403, Glu-450, and Glu-455 together coordinate Ca(2+).

It belongs to the transglutaminase superfamily. Transglutaminase family. Ca(2+) is required as a cofactor. As to expression, widely expressed.

The enzyme catalyses L-glutaminyl-[protein] + L-lysyl-[protein] = [protein]-L-lysyl-N(6)-5-L-glutamyl-[protein] + NH4(+). Its function is as follows. Catalyzes the cross-linking of proteins and the conjugation of polyamines to proteins. In Homo sapiens (Human), this protein is Protein-glutamine gamma-glutamyltransferase Z (TGM7).